The following is a 477-amino-acid chain: Small ribosomal subunit protein uS5m (477 aa).

The protein belongs to the universal ribosomal protein uS5 family. As to quaternary structure, component of the mitochondrial small ribosomal subunit (mt-SSU). Mature N.crassa 74S mitochondrial ribosomes consist of a small (37S) and a large (54S) subunit. The 37S small subunit contains a 16S ribosomal RNA (16S mt-rRNA) and 32 different proteins. The 54S large subunit contains a 23S rRNA (23S mt-rRNA) and 42 different proteins. uS3m, uS4m and uS5m form the narrow entry site of the mRNA channel.

The protein resides in the mitochondrion. In terms of biological role, component of the mitochondrial ribosome (mitoribosome), a dedicated translation machinery responsible for the synthesis of mitochondrial genome-encoded proteins, including at least some of the essential transmembrane subunits of the mitochondrial respiratory chain. The mitoribosomes are attached to the mitochondrial inner membrane and translation products are cotranslationally integrated into the membrane. The polypeptide is Small ribosomal subunit protein uS5m (mrps5) (Neurospora crassa (strain ATCC 24698 / 74-OR23-1A / CBS 708.71 / DSM 1257 / FGSC 987)).